The sequence spans 50 residues: Sperm protamine P1 (50 aa).

Belongs to the protamine P1 family. As to quaternary structure, cross-linked by interchain disulfide bonds around the DNA-helix. Testis.

The protein resides in the nucleus. It localises to the chromosome. In terms of biological role, protamines substitute for histones in the chromatin of sperm during the haploid phase of spermatogenesis. They compact sperm DNA into a highly condensed, stable and inactive complex. The protein is Sperm protamine P1 (PRM1) of Saimiri sciureus (Common squirrel monkey).